Consider the following 193-residue polypeptide: Large ribosomal subunit protein bL25 (193 aa).

The protein belongs to the bacterial ribosomal protein bL25 family. CTC subfamily. Part of the 50S ribosomal subunit; part of the 5S rRNA/L5/L18/L25 subcomplex. Contacts the 5S rRNA. Binds to the 5S rRNA independently of L5 and L18.

Its function is as follows. This is one of the proteins that binds to the 5S RNA in the ribosome where it forms part of the central protuberance. The sequence is that of Large ribosomal subunit protein bL25 from Clostridium tetani (strain Massachusetts / E88).